The chain runs to 1720 residues: 6-methylcalicylic acide synthase (1720 aa).

The disordered stretch occupies residues 1 to 31 (MDKQSASGEIPAMRWEPYHRRDPRNAKELSK). Positions 1-399 (MDKQSASGEI…GTVSHAVIEQ (399 aa)) constitute a Ketosynthase family 3 (KS3) domain. Over residues 16–30 (EPYHRRDPRNAKELS) the composition is skewed to basic and acidic residues. Active-site for beta-ketoacyl synthase activity residues include C146, H281, and H321. Residues 509 to 823 (VWVFSGHGAQ…IAQLHCRGAE (315 aa)) form a malonyl-CoA:ACP transacylase (MAT) domain region. Positions 868-987 (HTLLGQRIGI…AYWARDIQEA (120 aa)) are N-terminal hotdog fold. A dehydratase (DH) domain region spans residues 868 to 1139 (HTLLGQRIGI…FTAMRFSEIE (272 aa)). Positions 868 to 1144 (HTLLGQRIGI…FSEIEGTPGV (277 aa)) constitute a PKS/mFAS DH domain. The active-site Proton acceptor; for dehydratase activity is H900. Positions 1001-1144 (GTRIRDDFSI…FSEIEGTPGV (144 aa)) are C-terminal hotdog fold. Residue D1065 is the Proton donor; for dehydratase activity of the active site. The product template (PT) domain stretch occupies residues 1148 to 1545 (MESLVHQLAW…AVAVQWTSWR (398 aa)). The region spanning 1644–1718 (VYLDEKIRGC…HLVGWFAEKV (75 aa)) is the Carrier domain. S1678 carries the post-translational modification O-(pantetheine 4'-phosphoryl)serine.

The protein localises to the cytoplasm. It localises to the cytosol. It catalyses the reaction 3 malonyl-CoA + acetyl-CoA + NADPH + 3 H(+) = 6-methylsalicylate + 3 CO2 + NADP(+) + 4 CoA + H2O. It participates in mycotoxin biosynthesis; patulin biosynthesis. 6-methylsalicylic acid synthase; part of the gene cluster that mediates the biosynthesis of patulin, an acetate-derived tetraketide mycotoxin produced by several fungal species that shows antimicrobial properties against several bacteria. PatK catalyzes the first step of the pathway which is the synthesis of 6-methylsalicylic acid via condensation of 1 acetate and 3 malonate units. The pathway begins with the synthesis of 6-methylsalicylic acid by the polyketide synthase (PKS) patK via condensation of acetate and malonate units. The 6-methylsalicylic acid decarboxylase patG then catalyzes the decarboxylation of 6-methylsalicylic acid to yield m-cresol (also known as 3-methylphenol). These first reactions occur in the cytosol. The intermediate m-cresol is then transported into the endoplasmic reticulum where the cytochrome P450 monooxygenase patH converts it to m-hydroxybenzyl alcohol, which is further converted to gentisyl alcohol by the cytochrome P450 monooxygenase patI. The oxidoreductases patJ and patO further convert gentisyl alcohol to isoepoxydon in the vacuole. PatN catalyzes then the transformation of isoepoxydon into phyllostine. The cluster protein patF is responsible for the conversion from phyllostine to neopatulin whereas the alcohol dehydrogenase patD converts neopatulin to E-ascladiol. The steps between isoepoxydon and E-ascladiol occur in the cytosol, and E-ascladiol is probably secreted to the extracellular space by one of the cluster-specific transporters patC or patM. Finally, the secreted patulin synthase patE catalyzes the conversion of E-ascladiol to patulin. This is 6-methylcalicylic acide synthase from Aspergillus clavatus (strain ATCC 1007 / CBS 513.65 / DSM 816 / NCTC 3887 / NRRL 1 / QM 1276 / 107).